The following is a 219-amino-acid chain: Holliday junction branch migration complex subunit RuvA (219 aa).

Residues 1–66 (MIEYIIGKIS…NFLFEYYGFK (66 aa)) form a domain I region. Residues 67 to 148 (TLREKIFFEN…SEYNNDVNHS (82 aa)) are domain II. Residues 149–154 (SINQQS) are flexible linker. Positions 155–219 (NSYNPVPDLV…EAVTNKTTVS (65 aa)) are domain III.

The protein belongs to the RuvA family. In terms of assembly, homotetramer. Forms an RuvA(8)-RuvB(12)-Holliday junction (HJ) complex. HJ DNA is sandwiched between 2 RuvA tetramers; dsDNA enters through RuvA and exits via RuvB. An RuvB hexamer assembles on each DNA strand where it exits the tetramer. Each RuvB hexamer is contacted by two RuvA subunits (via domain III) on 2 adjacent RuvB subunits; this complex drives branch migration. In the full resolvosome a probable DNA-RuvA(4)-RuvB(12)-RuvC(2) complex forms which resolves the HJ.

It is found in the cytoplasm. Functionally, the RuvA-RuvB-RuvC complex processes Holliday junction (HJ) DNA during genetic recombination and DNA repair, while the RuvA-RuvB complex plays an important role in the rescue of blocked DNA replication forks via replication fork reversal (RFR). RuvA specifically binds to HJ cruciform DNA, conferring on it an open structure. The RuvB hexamer acts as an ATP-dependent pump, pulling dsDNA into and through the RuvAB complex. HJ branch migration allows RuvC to scan DNA until it finds its consensus sequence, where it cleaves and resolves the cruciform DNA. This chain is Holliday junction branch migration complex subunit RuvA, found in Malacoplasma penetrans (strain HF-2) (Mycoplasma penetrans).